Consider the following 71-residue polypeptide: Conotoxin Bu23 (71 aa).

The signal sequence occupies residues 1 to 21 (MGMRMMVTVFLLGVLATTVVS). The propeptide occupies 22–37 (LRSNRASDGRRGIVNK). N70 bears the Asparagine amide mark.

The protein belongs to the conotoxin A superfamily. Contains 3 disulfide bonds. They are not indicated here, since framework IV presents two different connectivities (I-V, II-III, IV-VI and I-III, II-V, IV-VI). As to expression, expressed by the venom duct.

The protein resides in the secreted. This Conus bullatus (Bubble cone) protein is Conotoxin Bu23.